We begin with the raw amino-acid sequence, 107 residues long: Bombesin (107 aa).

Positions 1–26 are cleaved as a signal peptide; that stretch reads MSAIPLNRILPLGFLLIFSFISLSSC. Positions 27–41 are excised as a propeptide; that stretch reads MEFVEDPNNQGGLNL. At Q42 the chain carries Pyrrolidone carboxylic acid. M55 is subject to Methionine amide. The propeptide occupies 56-107; sequence GKKSLQDTDFEEMESFAKRNVENMKAESERELRHAQLVVRNILEQYLKNMQN.

Expressed by the skin glands.

The protein localises to the secreted. Stimulates smooth muscle contraction. Role in induction of hypothermia, stimulation of DNA replication and release of many gastrointestinal hormones. Possesses insulin-releasing activity. This chain is Bombesin, found in Bombina variegata (Yellow-bellied toad).